Reading from the N-terminus, the 130-residue chain is Small ribosomal subunit protein uS9 (130 aa).

The protein belongs to the universal ribosomal protein uS9 family.

This chain is Small ribosomal subunit protein uS9, found in Vibrio vulnificus (strain CMCP6).